A 1241-amino-acid chain; its full sequence is DNA-directed RNA polymerase subunit beta (1241 aa).

The disordered stretch occupies residues 1195–1219; sequence PQDVQENVSGENVDAGYENEDVDID.

The protein belongs to the RNA polymerase beta chain family. As to quaternary structure, the RNAP catalytic core consists of 2 alpha, 1 beta, 1 beta' and 1 omega subunit. When a sigma factor is associated with the core the holoenzyme is formed, which can initiate transcription.

It carries out the reaction RNA(n) + a ribonucleoside 5'-triphosphate = RNA(n+1) + diphosphate. Its function is as follows. DNA-dependent RNA polymerase catalyzes the transcription of DNA into RNA using the four ribonucleoside triphosphates as substrates. The protein is DNA-directed RNA polymerase subunit beta of Clostridium acetobutylicum (strain ATCC 824 / DSM 792 / JCM 1419 / IAM 19013 / LMG 5710 / NBRC 13948 / NRRL B-527 / VKM B-1787 / 2291 / W).